A 176-amino-acid polypeptide reads, in one-letter code: RNA pyrophosphohydrolase (176 aa).

In terms of domain architecture, Nudix hydrolase spans 6–149; the sequence is GYRPNVGIVI…KRDVYRRVMK (144 aa). A Nudix box motif is present at residues 38-59; sequence GGINPGESAEQAMYRELFEEVG.

The protein belongs to the Nudix hydrolase family. RppH subfamily. It depends on a divalent metal cation as a cofactor.

Functionally, accelerates the degradation of transcripts by removing pyrophosphate from the 5'-end of triphosphorylated RNA, leading to a more labile monophosphorylated state that can stimulate subsequent ribonuclease cleavage. In Salmonella paratyphi C (strain RKS4594), this protein is RNA pyrophosphohydrolase.